Reading from the N-terminus, the 260-residue chain is Indole-3-glycerol phosphate synthase (260 aa).

It belongs to the TrpC family.

The catalysed reaction is 1-(2-carboxyphenylamino)-1-deoxy-D-ribulose 5-phosphate + H(+) = (1S,2R)-1-C-(indol-3-yl)glycerol 3-phosphate + CO2 + H2O. It functions in the pathway amino-acid biosynthesis; L-tryptophan biosynthesis; L-tryptophan from chorismate: step 4/5. This chain is Indole-3-glycerol phosphate synthase, found in Staphylococcus aureus (strain COL).